The following is a 51-amino-acid chain: FVNQHLCGPHLVEALYLVCGERGFFYAPKTGVVDQCCTSICSLYQLQNYCN.

Intrachain disulfides connect cysteine 7/cysteine 37, cysteine 19/cysteine 50, and cysteine 36/cysteine 41.

This sequence belongs to the insulin family. As to quaternary structure, heterodimer of a B chain and an A chain linked by two disulfide bonds.

It localises to the secreted. Insulin decreases blood glucose concentration. It increases cell permeability to monosaccharides, amino acids and fatty acids. It accelerates glycolysis, the pentose phosphate cycle, and glycogen synthesis in liver. This Saimiri sciureus (Common squirrel monkey) protein is Insulin (INS).